Here is a 231-residue protein sequence, read N- to C-terminus: Ureidoacrylate amidohydrolase RutB (231 aa).

The Proton acceptor role is filled by D25. K134 is a catalytic residue. Catalysis depends on C167, which acts as the Nucleophile.

Belongs to the isochorismatase family. RutB subfamily.

It catalyses the reaction (Z)-3-ureidoacrylate + H2O + H(+) = (Z)-3-aminoacrylate + NH4(+) + CO2. The enzyme catalyses (Z)-3-ureidoacrylate + H2O = (Z)-3-aminoacrylate + carbamate + H(+). The catalysed reaction is (Z)-2-methylureidoacrylate + H2O + H(+) = (Z)-2-methylaminoacrylate + NH4(+) + CO2. Hydrolyzes ureidoacrylate to form aminoacrylate and carbamate. The carbamate hydrolyzes spontaneously, thereby releasing one of the nitrogen atoms of the pyrimidine ring as ammonia and one of its carbon atoms as CO2. The polypeptide is Ureidoacrylate amidohydrolase RutB (Escherichia coli O139:H28 (strain E24377A / ETEC)).